A 557-amino-acid polypeptide reads, in one-letter code: Protein Red (557 aa).

The tract at residues 1-90 is disordered; it reads MPERDSEPFS…YAKLRQQEIE (90 aa). Residues 16-25 are compositionally biased toward basic and acidic residues; that stretch reads DGHDVDDPHS. The segment covering 42 to 53 has biased composition (low complexity); sequence TPRAAPTSAPPS. N6-acetyllysine is present on residues lysine 98 and lysine 137. Residue lysine 151 forms a Glycyl lysine isopeptide (Lys-Gly) (interchain with G-Cter in SUMO2) linkage. A disordered region spans residues 181–205; the sequence is KEKEEEELMEKPQKETKKDEDPENK. Serine 287 is subject to Phosphoserine. Residues 294 to 303 show a composition bias toward basic residues; sequence RNKKLKKKDK. The segment at 294–402 is disordered; that stretch reads RNKKLKKKDK…PMDVDKGPGS (109 aa). The span at 304 to 313 shows a compositional bias: basic and acidic residues; sequence GKLEEKKPPE. Residues lysine 310 and lysine 331 each participate in a glycyl lysine isopeptide (Lys-Gly) (interchain with G-Cter in SUMO2) cross-link. The span at 332–398 shows a compositional bias: basic and acidic residues; that stretch reads TPRDKERERY…VDDEPMDVDK (67 aa). 17 repeat units span residues 342-343, 344-345, 346-347, 348-349, 350-351, 352-353, 354-355, 356-357, 358-359, 360-361, 362-363, 364-365, 366-367, 368-369, 370-371, 372-373, and 374-375. The 17 X 2 AA tandem repeats of R-[ED] stretch occupies residues 342 to 375; it reads RERERDRERDRDRERDRERDRERERERDRERERE. Residues lysine 386, lysine 388, lysine 404, and lysine 408 each participate in a glycyl lysine isopeptide (Lys-Gly) (interchain with G-Cter in SUMO2) cross-link. Serine 417 and serine 460 each carry phosphoserine. Threonine 485 is modified (phosphothreonine). Glycyl lysine isopeptide (Lys-Gly) (interchain with G-Cter in SUMO2) cross-links involve residues lysine 496, lysine 501, and lysine 509. Position 536 is a phosphoserine (serine 536). Glycyl lysine isopeptide (Lys-Gly) (interchain with G-Cter in SUMO2) cross-links involve residues lysine 541, lysine 543, and lysine 553.

This sequence belongs to the RED family. Component of the spliceosome B complex. Interacts with SMU1. Interacts with MAD1L1. May interact with DHX15. As to expression, ubiquitous.

Its subcellular location is the nucleus. The protein resides in the nucleoplasm. It localises to the chromosome. The protein localises to the cytoplasm. It is found in the cytoskeleton. Its subcellular location is the spindle pole. In terms of biological role, involved in pre-mRNA splicing as a component of the spliceosome. Auxiliary spliceosomal protein that regulates selection of alternative splice sites in a small set of target pre-mRNA species. Required for normal mitotic cell cycle progression. Recruits MAD1L1 and MAD2L1 to kinetochores, and is required to trigger the spindle assembly checkpoint. Required for normal accumulation of SMU1. In Mus musculus (Mouse), this protein is Protein Red (Ik).